A 274-amino-acid polypeptide reads, in one-letter code: Thiamine kinase (274 aa).

This sequence belongs to the thiamine kinase family.

It carries out the reaction thiamine + ATP = thiamine phosphate + ADP + H(+). It functions in the pathway cofactor biosynthesis; thiamine diphosphate biosynthesis; thiamine phosphate from thiamine: step 1/1. Catalyzes the ATP-dependent phosphorylation of thiamine to thiamine phosphate. Is involved in thiamine salvage. The polypeptide is Thiamine kinase (Escherichia coli O157:H7).